The primary structure comprises 281 residues: sn-glycerol-3-phosphate transport system permease protein UgpE (281 aa).

The next 6 membrane-spanning stretches (helical) occupy residues 16 to 36, 85 to 105, 113 to 133, 142 to 162, 202 to 222, and 247 to 267; these read LILG…AATL, FSIT…IVWF, FFWM…FPTV, LDSY…TFLF, ALFV…LLII, and WNSV…IVLV. Residues 77-268 form the ABC transmembrane type-1 domain; the sequence is LLNSFVMAFS…IPPVVIVLVM (192 aa).

The protein belongs to the binding-protein-dependent transport system permease family. UgpAE subfamily. As to quaternary structure, the complex is composed of two ATP-binding proteins (UgpC), two transmembrane proteins (UgpA and UgpE) and a solute-binding protein (UgpB).

It localises to the cell inner membrane. In terms of biological role, part of the ABC transporter complex UgpBAEC involved in sn-glycerol-3-phosphate (G3P) import. Probably responsible for the translocation of the substrate across the membrane. Can also transport glycerophosphoryl diesters, which are hydrolyzed to G3P and alcohol during transport. The G3P moiety can be detected in the cytoplasm whereas the corresponding alcohol is usually found in the culture medium. It was proposed by Yang et al that the complex could also transport glycerol-2-phosphate (G2P) in vivo, but it was shown later by Wuttge et al that UgpB does not bind G2P, questioning this transport activity. G2P might be converted in the periplasm to G3P before its transport. This Escherichia coli (strain K12) protein is sn-glycerol-3-phosphate transport system permease protein UgpE.